The following is a 657-amino-acid chain: Threonine--tRNA ligase (657 aa).

Residues 7-70 (ILAVIALTLP…TADAAIEIIT (64 aa)) enclose the TGS domain. A catalytic region spans residues 253–555 (DHRKLGAELE…LIEHTAGNFP (303 aa)). Zn(2+)-binding residues include C351, H402, and H532.

Belongs to the class-II aminoacyl-tRNA synthetase family. Homodimer. The cofactor is Zn(2+).

It is found in the cytoplasm. The enzyme catalyses tRNA(Thr) + L-threonine + ATP = L-threonyl-tRNA(Thr) + AMP + diphosphate + H(+). Its function is as follows. Catalyzes the attachment of threonine to tRNA(Thr) in a two-step reaction: L-threonine is first activated by ATP to form Thr-AMP and then transferred to the acceptor end of tRNA(Thr). Also edits incorrectly charged L-seryl-tRNA(Thr). The protein is Threonine--tRNA ligase of Pelodictyon phaeoclathratiforme (strain DSM 5477 / BU-1).